The chain runs to 663 residues: 4-hydroxy-3-methylbut-2-en-1-yl diphosphate synthase (flavodoxin) (663 aa).

Positions 568, 571, 602, and 609 each coordinate [4Fe-4S] cluster.

It belongs to the IspG family. Requires [4Fe-4S] cluster as cofactor.

It catalyses the reaction (2E)-4-hydroxy-3-methylbut-2-enyl diphosphate + oxidized [flavodoxin] + H2O + 2 H(+) = 2-C-methyl-D-erythritol 2,4-cyclic diphosphate + reduced [flavodoxin]. It functions in the pathway isoprenoid biosynthesis; isopentenyl diphosphate biosynthesis via DXP pathway; isopentenyl diphosphate from 1-deoxy-D-xylulose 5-phosphate: step 5/6. Its function is as follows. Converts 2C-methyl-D-erythritol 2,4-cyclodiphosphate (ME-2,4cPP) into 1-hydroxy-2-methyl-2-(E)-butenyl 4-diphosphate. The chain is 4-hydroxy-3-methylbut-2-en-1-yl diphosphate synthase (flavodoxin) from Leptospira borgpetersenii serovar Hardjo-bovis (strain L550).